The sequence spans 708 residues: Glycogen [starch] synthase isoform 1 (708 aa).

Arg-20 contributes to the UDP binding site. Ser-159 carries the post-translational modification Phosphoserine. His-193 and Arg-199 together coordinate UDP-alpha-D-glucose. Alpha-D-glucose 6-phosphate-binding residues include His-280, Glu-281, Gln-283, His-286, and Lys-290. Arg-320 lines the UDP pocket. UDP-alpha-D-glucose is bound at residue Arg-320. Ser-363 is subject to Phosphoserine. His-500 is a binding site for alpha-D-glucose 6-phosphate. Residues Glu-509, Trp-511, and Gly-512 each coordinate UDP-alpha-D-glucose. UDP is bound at residue Thr-514. Residue Ser-560 is modified to Phosphoserine. Alpha-D-glucose 6-phosphate contacts are provided by Arg-583 and Arg-587. A phosphoserine mark is found at Ser-651 and Ser-655. 2 positions are modified to phosphoserine; by PKA: Ser-660 and Ser-662. A disordered region spans residues 687 to 708 (STNGAIDNDDDDNDTSAYYEDN). Residues 693–708 (DNDDDDNDTSAYYEDN) are compositionally biased toward acidic residues.

The protein belongs to the glycosyltransferase 3 family.

It carries out the reaction [(1-&gt;4)-alpha-D-glucosyl](n) + UDP-alpha-D-glucose = [(1-&gt;4)-alpha-D-glucosyl](n+1) + UDP + H(+). Its pathway is glycan biosynthesis; glycogen biosynthesis. Its activity is regulated as follows. Allosteric activation by glucose-6-phosphate, and phosphorylation by a cAMP-dependent kinase. Its function is as follows. Glycogen synthase participates in the glycogen biosynthetic process along with glycogenin and glycogen branching enzyme. Extends the primer composed of a few glucose units formed by glycogenin by adding new glucose units to it. In this context, glycogen synthase transfers the glycosyl residue from UDP-Glc to the non-reducing end of alpha-1,4-glucan. The sequence is that of Glycogen [starch] synthase isoform 1 (GSY1) from Saccharomyces cerevisiae (strain ATCC 204508 / S288c) (Baker's yeast).